Consider the following 1070-residue polypeptide: DNA-directed RNA polymerase subunit beta (1070 aa).

The protein belongs to the RNA polymerase beta chain family. In terms of assembly, in plastids the minimal PEP RNA polymerase catalytic core is composed of four subunits: alpha, beta, beta', and beta''. When a (nuclear-encoded) sigma factor is associated with the core the holoenzyme is formed, which can initiate transcription.

The protein resides in the plastid. It is found in the chloroplast. It catalyses the reaction RNA(n) + a ribonucleoside 5'-triphosphate = RNA(n+1) + diphosphate. DNA-dependent RNA polymerase catalyzes the transcription of DNA into RNA using the four ribonucleoside triphosphates as substrates. In Nicotiana sylvestris (Wood tobacco), this protein is DNA-directed RNA polymerase subunit beta.